Reading from the N-terminus, the 446-residue chain is Trigger factor (446 aa).

The PPIase FKBP-type domain maps to 182–267; sequence GDKVVVDYQN…VKNIFMMKAI (86 aa).

The protein belongs to the FKBP-type PPIase family. Tig subfamily.

It localises to the cytoplasm. The catalysed reaction is [protein]-peptidylproline (omega=180) = [protein]-peptidylproline (omega=0). Its function is as follows. Involved in protein export. Acts as a chaperone by maintaining the newly synthesized protein in an open conformation. Functions as a peptidyl-prolyl cis-trans isomerase. The polypeptide is Trigger factor (Ehrlichia ruminantium (strain Gardel)).